Consider the following 203-residue polypeptide: uncharacterized protein (203 aa).

Residues methionine 1 to alanine 31 form the signal peptide.

This is an uncharacterized protein from Bacillus subtilis (strain 168).